The following is a 268-amino-acid chain: DNA repair protein RecO (268 aa).

Belongs to the RecO family.

Functionally, involved in DNA repair and RecF pathway recombination. This is DNA repair protein RecO from Parasynechococcus marenigrum (strain WH8102).